The following is a 552-amino-acid chain: Putative transport protein ECA4401 (552 aa).

5 helical membrane passes run 4–24, 26–46, 65–85, 90–112, and 158–178; these read IALT…IGNW, IYGV…VGHV, FGLI…FFSS, GLRL…VMLH, and TGYA…MWLM. 2 RCK C-terminal domains span residues 191-276 and 279-361; these read KQFE…VIGN and ETSL…IVGN. Transmembrane regions (helical) follow at residues 371 to 391, 393 to 413, 439 to 459, 464 to 484, 493 to 513, and 530 to 550; these read MLPV…PLMV, GFPV…ALVL, IVLF…DTLL, VWWI…VGIL, YLTL…LAFA, and VYPL…VLFL.

It belongs to the AAE transporter (TC 2.A.81) family. YidE subfamily.

It is found in the cell membrane. This is Putative transport protein ECA4401 from Pectobacterium atrosepticum (strain SCRI 1043 / ATCC BAA-672) (Erwinia carotovora subsp. atroseptica).